Here is a 242-residue protein sequence, read N- to C-terminus: Uridylate kinase (242 aa).

15–18 (KLSG) serves as a coordination point for ATP. Gly57 serves as a coordination point for UMP. ATP-binding residues include Gly58 and Arg62. Residues Asp78 and 139–146 (TGNPFFTT) each bind UMP. 3 residues coordinate ATP: Thr166, Tyr172, and Asp175.

Belongs to the UMP kinase family. In terms of assembly, homohexamer.

The protein resides in the cytoplasm. The enzyme catalyses UMP + ATP = UDP + ADP. The protein operates within pyrimidine metabolism; CTP biosynthesis via de novo pathway; UDP from UMP (UMPK route): step 1/1. Inhibited by UTP. Catalyzes the reversible phosphorylation of UMP to UDP. The polypeptide is Uridylate kinase (Acinetobacter baylyi (strain ATCC 33305 / BD413 / ADP1)).